The sequence spans 525 residues: GMP synthase [glutamine-hydrolyzing] (525 aa).

One can recognise a Glutamine amidotransferase type-1 domain in the interval 9 to 207 (RILILDFGSQ…VRDICQCEAL (199 aa)). Cys86 (nucleophile) is an active-site residue. Residues His181 and Glu183 contribute to the active site. Residues 208–400 (WTPAKIIDDA…LGLPYDMLYR (193 aa)) form the GMPS ATP-PPase domain. 235-241 (SGGVDSS) is an ATP binding site.

As to quaternary structure, homodimer.

It carries out the reaction XMP + L-glutamine + ATP + H2O = GMP + L-glutamate + AMP + diphosphate + 2 H(+). It participates in purine metabolism; GMP biosynthesis; GMP from XMP (L-Gln route): step 1/1. Functionally, catalyzes the synthesis of GMP from XMP. This is GMP synthase [glutamine-hydrolyzing] from Salmonella paratyphi B (strain ATCC BAA-1250 / SPB7).